The sequence spans 231 residues: Cytochrome c oxidase subunit 2 (231 aa).

The Mitochondrial intermembrane portion of the chain corresponds to Met-1–Ser-14. The chain crosses the membrane as a helical span at residues Pro-15–Met-45. The Mitochondrial matrix segment spans residues Leu-46 to Gln-59. The chain crosses the membrane as a helical span at residues Glu-60–Thr-87. At Asp-88–Leu-231 the chain is on the mitochondrial intermembrane side. The Cu cation site is built by His-161, Cys-196, Glu-198, Cys-200, His-204, and Met-207. Glu-198 serves as a coordination point for Mg(2+).

Belongs to the cytochrome c oxidase subunit 2 family. In terms of assembly, component of the cytochrome c oxidase (complex IV, CIV), a multisubunit enzyme composed of 14 subunits. The complex is composed of a catalytic core of 3 subunits MT-CO1, MT-CO2 and MT-CO3, encoded in the mitochondrial DNA, and 11 supernumerary subunits COX4I, COX5A, COX5B, COX6A, COX6B, COX6C, COX7A, COX7B, COX7C, COX8 and NDUFA4, which are encoded in the nuclear genome. The complex exists as a monomer or a dimer and forms supercomplexes (SCs) in the inner mitochondrial membrane with NADH-ubiquinone oxidoreductase (complex I, CI) and ubiquinol-cytochrome c oxidoreductase (cytochrome b-c1 complex, complex III, CIII), resulting in different assemblies (supercomplex SCI(1)III(2)IV(1) and megacomplex MCI(2)III(2)IV(2)). Found in a complex with TMEM177, COA6, COX18, COX20, SCO1 and SCO2. Interacts with TMEM177 in a COX20-dependent manner. Interacts with COX20. Interacts with COX16. Cu cation serves as cofactor.

Its subcellular location is the mitochondrion inner membrane. It catalyses the reaction 4 Fe(II)-[cytochrome c] + O2 + 8 H(+)(in) = 4 Fe(III)-[cytochrome c] + 2 H2O + 4 H(+)(out). Component of the cytochrome c oxidase, the last enzyme in the mitochondrial electron transport chain which drives oxidative phosphorylation. The respiratory chain contains 3 multisubunit complexes succinate dehydrogenase (complex II, CII), ubiquinol-cytochrome c oxidoreductase (cytochrome b-c1 complex, complex III, CIII) and cytochrome c oxidase (complex IV, CIV), that cooperate to transfer electrons derived from NADH and succinate to molecular oxygen, creating an electrochemical gradient over the inner membrane that drives transmembrane transport and the ATP synthase. Cytochrome c oxidase is the component of the respiratory chain that catalyzes the reduction of oxygen to water. Electrons originating from reduced cytochrome c in the intermembrane space (IMS) are transferred via the dinuclear copper A center (CU(A)) of subunit 2 and heme A of subunit 1 to the active site in subunit 1, a binuclear center (BNC) formed by heme A3 and copper B (CU(B)). The BNC reduces molecular oxygen to 2 water molecules using 4 electrons from cytochrome c in the IMS and 4 protons from the mitochondrial matrix. The chain is Cytochrome c oxidase subunit 2 (MT-CO2) from Alouatta palliata (Mantled howler monkey).